Here is a 340-residue protein sequence, read N- to C-terminus: DNA-directed RNA polymerase subunit alpha (340 aa).

An alpha N-terminal domain (alpha-NTD) region spans residues 1–238 (MADTFVAKNW…EQLTVFVNFD (238 aa)). The segment at 253–340 (AKLNENLFRS…QAPAPAQPKA (88 aa)) is alpha C-terminal domain (alpha-CTD).

The protein belongs to the RNA polymerase alpha chain family. As to quaternary structure, homodimer. The RNAP catalytic core consists of 2 alpha, 1 beta, 1 beta' and 1 omega subunit. When a sigma factor is associated with the core the holoenzyme is formed, which can initiate transcription.

The catalysed reaction is RNA(n) + a ribonucleoside 5'-triphosphate = RNA(n+1) + diphosphate. Functionally, DNA-dependent RNA polymerase catalyzes the transcription of DNA into RNA using the four ribonucleoside triphosphates as substrates. The polypeptide is DNA-directed RNA polymerase subunit alpha (Myxococcus xanthus (strain DK1622)).